A 374-amino-acid chain; its full sequence is Putative glutamate--cysteine ligase 2-1 (374 aa).

It belongs to the glutamate--cysteine ligase type 2 family. YbdK subfamily.

The enzyme catalyses L-cysteine + L-glutamate + ATP = gamma-L-glutamyl-L-cysteine + ADP + phosphate + H(+). In terms of biological role, ATP-dependent carboxylate-amine ligase which exhibits weak glutamate--cysteine ligase activity. This is Putative glutamate--cysteine ligase 2-1 from Saccharopolyspora erythraea (strain ATCC 11635 / DSM 40517 / JCM 4748 / NBRC 13426 / NCIMB 8594 / NRRL 2338).